We begin with the raw amino-acid sequence, 108 residues long: Large ribosomal subunit protein bL21 (108 aa).

This sequence belongs to the bacterial ribosomal protein bL21 family. Part of the 50S ribosomal subunit. Contacts protein L20.

Its function is as follows. This protein binds to 23S rRNA in the presence of protein L20. This is Large ribosomal subunit protein bL21 from Acidobacterium capsulatum (strain ATCC 51196 / DSM 11244 / BCRC 80197 / JCM 7670 / NBRC 15755 / NCIMB 13165 / 161).